The chain runs to 386 residues: Patatin group M-3 (386 aa).

The signal sequence occupies residues 1-23 (MATTKSFLILFFMILATTSSTCA). A PNPLA domain is found at 32 to 229 (LSIDGGGIKG…TVGDPALLSL (198 aa)). A GXGXXG motif is present at residues 36-41 (GGGIKG). The GXSXG motif lies at 75-79 (GTSTG). The Nucleophile role is filled by Ser77. The N-linked (GlcNAc...) asparagine glycan is linked to Asn115. Asp215 (proton acceptor) is an active-site residue. The short motif at 215 to 217 (DGG) is the DGA/G element. The stretch at 321-384 (ENALTGTTTE…DRKKLRANKA (64 aa)) forms a coiled coil.

This sequence belongs to the patatin family. Tuber.

The protein resides in the vacuole. Functionally, probable lipolytic acyl hydrolase (LAH), an activity which is thought to be involved in the response of tubers to pathogens. This is Patatin group M-3 from Solanum tuberosum (Potato).